The following is a 151-amino-acid chain: Methylated-DNA--protein-cysteine methyltransferase (151 aa).

Cys119 serves as the catalytic Nucleophile; methyl group acceptor.

This sequence belongs to the MGMT family.

The protein localises to the cytoplasm. The catalysed reaction is a 6-O-methyl-2'-deoxyguanosine in DNA + L-cysteinyl-[protein] = S-methyl-L-cysteinyl-[protein] + a 2'-deoxyguanosine in DNA. The enzyme catalyses a 4-O-methyl-thymidine in DNA + L-cysteinyl-[protein] = a thymidine in DNA + S-methyl-L-cysteinyl-[protein]. Its function is as follows. Involved in the cellular defense against the biological effects of O6-methylguanine (O6-MeG) and O4-methylthymine (O4-MeT) in DNA. Repairs the methylated nucleobase in DNA by stoichiometrically transferring the methyl group to a cysteine residue in the enzyme. This is a suicide reaction: the enzyme is irreversibly inactivated. The sequence is that of Methylated-DNA--protein-cysteine methyltransferase from Saccharolobus islandicus (strain M.16.27) (Sulfolobus islandicus).